The chain runs to 907 residues: Schlafen family member 13 (907 aa).

A n'-domain region region spans residues methionine 1 to proline 353. Residues glutamate 205 and glutamate 210 contribute to the active site. Histidine 281, cysteine 283, and cysteine 318 together coordinate Zn(2+). Glycine 604–threonine 611 serves as a coordination point for ATP.

The protein belongs to the Schlafen family. Subgroup III subfamily. Requires Mg(2+) as cofactor.

It is found in the cytoplasm. Functionally, endoribonuclease that cleaves tRNAs and rRNAs. Cleaves tRNAs 11 nucleotides from the 3'-terminus at the acceptor stem. Does not act on tRNA(Sec). The sequence is that of Schlafen family member 13 from Rattus norvegicus (Rat).